The sequence spans 119 residues: MFKKNDRSQSRERRHMRVRKKIFGTAERPRLSVYRSEKHIYAQLIDDIEGKTLVAASSAEKGFDGVGSNKEGAKLVGKMVAEKALEKGLKKVVFDRGGFIYHGRIKELAEGAREAGLDF.

This sequence belongs to the universal ribosomal protein uL18 family. Part of the 50S ribosomal subunit; part of the 5S rRNA/L5/L18/L25 subcomplex. Contacts the 5S and 23S rRNAs.

In terms of biological role, this is one of the proteins that bind and probably mediate the attachment of the 5S RNA into the large ribosomal subunit, where it forms part of the central protuberance. This is Large ribosomal subunit protein uL18 from Clostridium botulinum (strain 657 / Type Ba4).